We begin with the raw amino-acid sequence, 360 residues long: uncharacterized protein (360 aa).

The region spanning 4-235 (LSLQHIQKIY…PANMFVAGFI (232 aa)) is the ABC transporter domain. 37-44 (GPSGCGKS) is a binding site for ATP.

This sequence belongs to the ABC transporter superfamily.

This is an uncharacterized protein from Escherichia coli O6:K15:H31 (strain 536 / UPEC).